A 262-amino-acid chain; its full sequence is Beta-phosphoglucomutase (262 aa).

The active-site Nucleophile is Asp-29. Mg(2+)-binding residues include Asp-29 and Asp-31. Asp-29 is subject to 4-aspartylphosphate. Residue Asp-31 is the Proton donor/acceptor of the active site. The beta-D-glucose 6-phosphate site is built by Asp-31, Gly-79, Arg-82, Ser-157, and Asn-159. Mg(2+) is bound at residue Asp-215.

The protein belongs to the HAD-like hydrolase superfamily. CbbY/CbbZ/Gph/YieH family. As to quaternary structure, monomer. The cofactor is Mg(2+). Post-translationally, autophosphorylated.

It catalyses the reaction beta-D-glucose 1-phosphate = beta-D-glucose 6-phosphate. Its function is as follows. Catalyzes the interconversion of D-glucose 1-phosphate (G1P) and D-glucose 6-phosphate (G6P), forming beta-D-glucose 1,6-(bis)phosphate (beta-G16P) as an intermediate. The sequence is that of Beta-phosphoglucomutase from Mycobacterium bovis (strain ATCC BAA-935 / AF2122/97).